A 225-amino-acid chain; its full sequence is Uracil-DNA glycosylase (225 aa).

The active-site Proton acceptor is the D65.

Belongs to the uracil-DNA glycosylase (UDG) superfamily. UNG family.

It is found in the cytoplasm. It catalyses the reaction Hydrolyzes single-stranded DNA or mismatched double-stranded DNA and polynucleotides, releasing free uracil.. Its function is as follows. Excises uracil residues from the DNA which can arise as a result of misincorporation of dUMP residues by DNA polymerase or due to deamination of cytosine. This is Uracil-DNA glycosylase from Bacillus cereus (strain B4264).